Here is a 129-residue protein sequence, read N- to C-terminus: Glycine cleavage system H protein (129 aa).

In terms of domain architecture, Lipoyl-binding spans 23–104; it reads SVTVGITQHA…CYAAWLFKLK (82 aa). The residue at position 64 (lysine 64) is an N6-lipoyllysine.

Belongs to the GcvH family. The glycine cleavage system is composed of four proteins: P, T, L and H. The cofactor is (R)-lipoate.

Its function is as follows. The glycine cleavage system catalyzes the degradation of glycine. The H protein shuttles the methylamine group of glycine from the P protein to the T protein. This Nitrosomonas europaea (strain ATCC 19718 / CIP 103999 / KCTC 2705 / NBRC 14298) protein is Glycine cleavage system H protein.